Here is a 604-residue protein sequence, read N- to C-terminus: Ectonucleoside triphosphate diphosphohydrolase 7 (604 aa).

Over 1 to 28 the chain is Cytoplasmic; that stretch reads MARISFSYLCPASWYFTVPTVSPFLRQR. The chain crosses the membrane as a helical span at residues 29–49; it reads VAFLGLFFISCLLLLMLIIDF. Residues 50–546 lie on the Vesicular side of the membrane; it reads RHWSASLPRD…QAHGSWFRLS (497 aa). Residue Glu-217 is the Proton acceptor of the active site. Residue Asn-330 is glycosylated (N-linked (GlcNAc...) asparagine). A disulfide bridge connects residues Cys-448 and Cys-477. Residues 547 to 567 traverse the membrane as a helical segment; it reads FVYNHYLFFACILVVLLAIFL. Over 568-604 the chain is Cytoplasmic; it reads YLLRLRRIHHRQTRASAPLDLLWLEEVVPMMGVQVGP.

This sequence belongs to the GDA1/CD39 NTPase family. Requires Ca(2+) as cofactor. The cofactor is Mg(2+).

Its subcellular location is the cytoplasmic vesicle membrane. The enzyme catalyses a ribonucleoside 5'-triphosphate + H2O = a ribonucleoside 5'-diphosphate + phosphate + H(+). The catalysed reaction is UTP + H2O = UDP + phosphate + H(+). It catalyses the reaction GTP + H2O = GDP + phosphate + H(+). It carries out the reaction CTP + H2O = CDP + phosphate + H(+). In terms of biological role, catalyzes the hydrolysis of nucleoside triphosphates and diphosphates in a calcium- or magnesium-dependent manner. Preferentially hydrolyzes nucleoside 5'-triphosphates, with substrate preference for UTP &gt; GTP &gt; CTP. Hydrolyzes ATP and nucleoside diphosphates only to a minor extent. The protein is Ectonucleoside triphosphate diphosphohydrolase 7 (ENTPD7) of Homo sapiens (Human).